We begin with the raw amino-acid sequence, 142 residues long: Large ribosomal subunit protein uL13 (142 aa).

This sequence belongs to the universal ribosomal protein uL13 family. In terms of assembly, part of the 50S ribosomal subunit.

Its function is as follows. This protein is one of the early assembly proteins of the 50S ribosomal subunit, although it is not seen to bind rRNA by itself. It is important during the early stages of 50S assembly. The protein is Large ribosomal subunit protein uL13 of Xanthomonas campestris pv. campestris (strain ATCC 33913 / DSM 3586 / NCPPB 528 / LMG 568 / P 25).